The sequence spans 659 residues: Siderophore transporter fer7 (659 aa).

The disordered stretch occupies residues 1 to 62 (MSNQAQDQPE…ADASSAREGQ (62 aa)). Residues 31-41 (QSVSAHGNTSL) show a composition bias toward polar residues. A glycan (N-linked (GlcNAc...) asparagine) is linked at Asn38. Basic and acidic residues predominate over residues 42 to 54 (NKKDRVSAVRDAD). Transmembrane regions (helical) follow at residues 79–99 (NSPI…CFAL), 121–141 (LFGV…PFIA), 150–170 (QTAY…VASA), 208–228 (GVVT…GNLI), 245–265 (GMFA…LMYV), 316–336 (LVGL…FSIY), 348–368 (IIAM…WEIL), and 379–399 (VWYN…FMGG). An N-linked (GlcNAc...) asparagine glycan is attached at Asn415. The next 2 helical transmembrane spans lie at 424-444 (VVNA…GFYL) and 451-471 (KFLQ…YLYG). N-linked (GlcNAc...) asparagine glycosylation is present at Asn475. 3 helical membrane passes run 478-498 (TMVV…SVVG), 528-548 (AIGS…YLAA), and 590-610 (PIFI…LLMP).

It belongs to the major facilitator superfamily.

It is found in the membrane. Siderophore transporter; part of the gene cluster that mediates the biosynthesis of siderophore ferrichrome A which is contributing to organismal virulence. This is Siderophore transporter fer7 from Mycosarcoma maydis (Corn smut fungus).